The chain runs to 435 residues: Maltodextrin transport system permease protein MalC (435 aa).

10 consecutive transmembrane segments (helical) span residues 34-54 (GFIF…LATP), 73-93 (FMLI…LFYF), 130-150 (YLLI…PVIV), 199-219 (IIWA…TAII), 230-250 (IFGV…ILTF), 263-283 (TQVL…LIPW), 294-314 (LIMM…LGIL), 338-358 (NITF…QYTF), 371-391 (GGGP…ISWI), and 404-424 (MAAA…MIAF). The 229-residue stretch at 195-423 (LSWTIIWALA…IIVISISMIA (229 aa)) folds into the ABC transmembrane type-1 domain.

Belongs to the binding-protein-dependent transport system permease family. MalFG subfamily.

It localises to the cell membrane. Its function is as follows. Part of the binding-protein-dependent transport system for maltodextrin; probably responsible for the translocation of the substrate across the membrane. The chain is Maltodextrin transport system permease protein MalC (malC) from Streptococcus pneumoniae serotype 4 (strain ATCC BAA-334 / TIGR4).